The sequence spans 203 residues: A-type ATP synthase subunit E (203 aa).

Belongs to the V-ATPase E subunit family. In terms of assembly, has multiple subunits with at least A(3), B(3), C, D, E, F, H, I and proteolipid K(x).

It localises to the cell membrane. Functionally, component of the A-type ATP synthase that produces ATP from ADP in the presence of a proton gradient across the membrane. This is A-type ATP synthase subunit E from Methanococcus aeolicus (strain ATCC BAA-1280 / DSM 17508 / OCM 812 / Nankai-3).